A 494-amino-acid polypeptide reads, in one-letter code: MLVAMSMTPIAILFSTPLKRFLREKVLLGNAPSWELLAILSIYFVQGVLGLSRLAVSFFLKDELGLSPAAMGALIGLGAAPWILKPVLGLMSDTVPLFGYRRRSYLWLSGLMGSAGWLLFAAWVSSGTQAGLVLLFTSLSVAIGDVIVDSLVVERAQRESLAQVGSLQSLTWGAAAVGGIITAYASGALLEWFSTRTVFAITAIFPLLTVGAAFLISEVSTAEEEEKPQPKAQIKLVWQAVRQKTILLPTLFIFFWQATPSAESAFFYFTTNELGFEPKFLGRVRLVTSVAGLIGVGLYQRFLKTLPFRVIMGWSTVISSLLGLTTLILITHANRAMGIDDHWFSLGDSIILTVTGQIAFMPVLVLAARLCPPGIEATLFALLMSVMNLAGVLSFEVGSLLTHWLGVTETQFDNLALLVIITNLSTLLPLPFLGLLPAGDPQVKDKTEKEDNPDDPGDRLVLPPAEVFEHHTVGSLSDQNFLPEFFPEKSSSRP.

Transmembrane regions (helical) follow at residues 31–51, 64–84, 104–124, 133–153, 170–190, 197–217, 246–266, 284–303, 310–330, 346–366, 375–395, and 415–435; these read APSW…VLGL, LGLS…PWIL, SYLW…AAWV, VLLF…SLVV, LTWG…GALL, TVFA…FLIS, ILLP…ESAF, VRLV…QRFL, VIMG…LILI, LGDS…VLVL, IEAT…VLSF, and LALL…FLGL. Residues 441–461 form a disordered region; that stretch reads PQVKDKTEKEDNPDDPGDRLV.

It belongs to the major facilitator superfamily. Folate-biopterin transporter (TC 2.A.71) family.

The protein localises to the cell membrane. Its function is as follows. Mediates folate monoglutamate transport involved in tetrahydrofolate biosynthesis. It also mediates transport of antifolates, such as methotrexate and aminopterin. This is Folate-biopterin transporter from Synechocystis sp. (strain ATCC 27184 / PCC 6803 / Kazusa).